The following is a 538-amino-acid chain: MFS-type transporter oryC (538 aa).

6 consecutive transmembrane segments (helical) span residues 14 to 34 (LTGGWLTFWVTVACATDMSLF), 67 to 87 (TVTAIYDVGCFFGAIVAFTIG), 96 to 116 (ILLGTTIMAIGAVLQAASFSL), 120 to 140 (FVGRIILGIGNGINTATAPIW), 162 to 182 (IFGFCLVNWINYGLSFVGGSI), and 186 to 206 (FPLAFQFFFLIILWSTTPWLP). N-linked (GlcNAc...) asparagine glycosylation occurs at Asn268. Helical transmembrane passes span 288 to 308 (FGGINIMSYYLPTVLMDSVGL), 315 to 335 (LLAACNALSYLVFSGLAVLLV), 342 to 362 (GLMLLSTFGQFLCFLIITILL), 379 to 399 (VAFFFLYYGAFGIGMLGVPWL), 416 to 436 (VATATDWITNFVVVEITPIGI), and 443 to 463 (FWIVWTVTNAAFLPILYFLYP). An N-linked (GlcNAc...) asparagine glycan is attached at Asn467.

It belongs to the major facilitator superfamily. Sugar transporter (TC 2.A.1.1) family.

It is found in the membrane. Functionally, MFS-type transporter; part of the gene cluster that mediates the biosynthesis of oryzines, natural products with an unusual maleidride backbone. The chain is MFS-type transporter oryC from Aspergillus oryzae (strain ATCC 42149 / RIB 40) (Yellow koji mold).